Here is a 592-residue protein sequence, read N- to C-terminus: Malic enzyme, hydrogenosomal (592 aa).

The N-terminal 27 residues, 1-27 (MLAPIQTIARPVSSILPATGALAAKRT), are a transit peptide targeting the hydrogenosome. Catalysis depends on Y134, which acts as the Proton donor. An NADP(+)-binding site is contributed by 182–205 (VTDGSRILGLGDLGAGGMQIPIGK). Residue R187 participates in NAD(+) binding. The active-site Proton acceptor is K205. Residues E276, D277, and D300 each contribute to the a divalent metal cation site. Residue D300 participates in NAD(+) binding. 335 to 352 (GAGSSGVGVCETIVDCIV) lines the NADP(+) pocket. Position 443 (N443) interacts with NAD(+).

The protein belongs to the malic enzymes family. Requires Mg(2+) as cofactor. It depends on Mn(2+) as a cofactor.

It localises to the hydrogenosome. It carries out the reaction (S)-malate + NADP(+) = pyruvate + CO2 + NADPH. The enzyme catalyses oxaloacetate + H(+) = pyruvate + CO2. This chain is Malic enzyme, hydrogenosomal, found in Neocallimastix frontalis (Rumen fungus).